We begin with the raw amino-acid sequence, 354 residues long: MGPVSVLPSPQSLSTWEGDLAKMTHLQAGLSPDTIEKARLELNENPDILHQDIQQVRDMIITRPDIGFLRTDDAFILRFLRARKFHQADAFRLLAQYFQYRQLNLDMFKNFKADDPGIKRALIDGFPGVLENRDHYGRKILLLFAANWDQSRNSFTDILRAILLSLEVLIEDPELQINGFILIIDWSNFSFKQASKLTPSILKLAIEGLQDSFPARFGGVHFVNQPWYIHALYTLIKPFLKDKTRKRIFLHGNNLNSLHQLIHPEFLPSEFGGTLPPYDMGTWARTLLGPDYSDENDYTHTSYNAMHVKHTCSNLERECSPKPMKRSQSVVEAGTLKHEEKGENENTQPLLALD.

A CRAL-TRIO domain is found at 118–279; the sequence is IKRALIDGFP…EFGGTLPPYD (162 aa). The segment at 317-354 is disordered; it reads RECSPKPMKRSQSVVEAGTLKHEEKGENENTQPLLALD. Residues 335–344 are compositionally biased toward basic and acidic residues; sequence TLKHEEKGEN. Positions 345 to 354 are enriched in polar residues; it reads ENTQPLLALD.

In terms of assembly, forms a complex with clathrin heavy chain and gamma-adaptin.

The protein resides in the golgi apparatus. Its subcellular location is the trans-Golgi network membrane. The protein localises to the early endosome membrane. It is found in the cytoplasmic vesicle. It localises to the clathrin-coated vesicle. Functionally, required for normal morphology of late endosomes and/or lysosomes in neurons. Binds phosphatidylinositol 3,5-bisphosphate (PtdIns(3,5)P2). This Mus musculus (Mouse) protein is Clavesin-1 (Clvs1).